Reading from the N-terminus, the 428-residue chain is Nocturnin (428 aa).

The transit peptide at 1–72 (MYQSPRRLCS…PMGNGTSRLY (72 aa)) directs the protein to the mitochondrion. The interval 21–66 (RRTLVPGPRRTLAPPVLGSRPASPQLQAAASGAARSRPRTVSPMGN) is disordered. Positions 39 to 55 (SRPASPQLQAAASGAAR) are enriched in low complexity. Glu-192 provides a ligand contact to Mg(2+). Residues Glu-192, 216-218 (KPW), Asn-260, 283-286 (HLKA), and 321-323 (DFN) each bind substrate. The segment at 340-350 (NLNSAYKLLSP) is interaction with PPARG. His-411 is a substrate binding site.

Belongs to the CCR4/nocturin family. In terms of assembly, interacts with PPARG. Mg(2+) is required as a cofactor.

The protein localises to the cytoplasm. It is found in the nucleus. Its subcellular location is the perinuclear region. It localises to the mitochondrion. It catalyses the reaction NADP(+) + H2O = phosphate + NAD(+). It carries out the reaction NADPH + H2O = phosphate + NADH. In terms of biological role, phosphatase which catalyzes the conversion of NADP(+) to NAD(+) and of NADPH to NADH. Shows a small preference for NADPH over NADP(+). Represses translation and promotes degradation of target mRNA molecules. Plays an important role in post-transcriptional regulation of metabolic genes under circadian control. Exerts a rhythmic post-transcriptional control of genes necessary for metabolic functions including nutrient absorption, glucose/insulin sensitivity, lipid metabolism, adipogenesis, inflammation and osteogenesis. Plays an important role in favoring adipogenesis over osteoblastogenesis and acts as a key regulator of the adipogenesis/osteogenesis balance. Promotes adipogenesis by facilitating PPARG nuclear translocation which activates its transcriptional activity. Regulates circadian expression of NOS2 in the liver and negatively regulates the circadian expression of IGF1 in the bone. Critical for proper development of early embryos. The sequence is that of Nocturnin from Rattus norvegicus (Rat).